The primary structure comprises 95 residues: Enhancer of yellow 2 transcription factor (95 aa).

This sequence belongs to the ENY2 family. As to quaternary structure, component of the nuclear pore complex (NPC)-associated AMEX complex (anchoring and mRNA export complex), composed of at least e(y)2 and xmas-2. Component of the SAGA transcription coactivator-HAT complexes, at least composed of Ada2b, e(y)2, Pcaf/Gcn5, Taf10 and Nipped-A/Trrap. Within the SAGA complex, e(y)2, Sgf11, and not/nonstop form an additional subcomplex of SAGA called the DUB module (deubiquitination module). Component of the THO complex, composed of at least e(y)2, HPR1, THO2, THOC5, THOC6 and THOC7. Interacts with e(y)1. Interacts with su(Hw) (via zinc fingers). Interacts with xmas-2; required for localization to the nuclear periphery. Interacts with the nuclear pore complex (NPC).

It localises to the nucleus. The protein resides in the nucleoplasm. The protein localises to the cytoplasm. Involved in mRNA export coupled transcription activation by association with both the AMEX and the SAGA complexes. The SAGA complex is a multiprotein complex that activates transcription by remodeling chromatin and mediating histone acetylation and deubiquitination. Within the SAGA complex, participates in a subcomplex that specifically deubiquitinates histone H2B. The SAGA complex is recruited to specific gene promoters by activators, where it is required for transcription. Required for nuclear receptor-mediated transactivation. Involved in transcription elongation by recruiting the THO complex onto nascent mRNA. The AMEX complex functions in docking export-competent ribonucleoprotein particles (mRNPs) to the nuclear entrance of the nuclear pore complex (nuclear basket). AMEX participates in mRNA export and accurate chromatin positioning in the nucleus by tethering genes to the nuclear periphery. The polypeptide is Enhancer of yellow 2 transcription factor (Drosophila virilis (Fruit fly)).